We begin with the raw amino-acid sequence, 501 residues long: IQ domain-containing protein M (501 aa).

Basic and acidic residues predominate over residues 237–247; it reads ERQPIKPEPKS. Residues 237–262 are disordered; sequence ERQPIKPEPKSQPRIKGTPNKTDKLD. One can recognise an IQ domain in the interval 290-319; the sequence is LIRMVTVMQAHVRGWLERKRLQRVMTKALD.

In Homo sapiens (Human), this protein is IQ domain-containing protein M.